A 320-amino-acid polypeptide reads, in one-letter code: uncharacterized protein (320 aa).

In terms of domain architecture, FHA spans 22–86 (KTIGRSSSFD…IRDLNNKTGT (65 aa)). Positions 242–264 (TDTDTTEEKEEEEEKEEGDDEEG) are disordered.

This is an uncharacterized protein from Saccharomyces cerevisiae (strain ATCC 204508 / S288c) (Baker's yeast).